Here is a 173-residue protein sequence, read N- to C-terminus: Peptidoglycan-associated lipoprotein (173 aa).

An N-terminal signal peptide occupies residues 1–21; the sequence is MKSKKIFKILTLLLPMITTFS. C22 is lipidated: N-palmitoyl cysteine. C22 carries the S-diacylglycerol cysteine lipid modification. Residues 59-173 form the OmpA-like domain; that stretch reads ETLEKLKKGN…KNRRSVIIYQ (115 aa).

Belongs to the Pal lipoprotein family.

It localises to the cell outer membrane. In Buchnera aphidicola subsp. Baizongia pistaciae (strain Bp), this protein is Peptidoglycan-associated lipoprotein.